Here is a 236-residue protein sequence, read N- to C-terminus: Sorulation-regulated protein 2 (236 aa).

Positions 1–20 (MLGLYLSSLFFAFFMAQVFA) are cleaved as a signal peptide. N155, N160, N203, and N212 each carry an N-linked (GlcNAc...) asparagine glycan. N212 carries GPI-anchor amidated asparagine lipidation. Residues 213 to 236 (SSSSLMPSMGILSFLFGLYLLLHP) constitute a propeptide, removed in mature form.

Post-translationally, the GPI-anchor is attached to the protein in the endoplasmic reticulum and serves to target the protein to the cell surface. There, the glucosamine-inositol phospholipid moiety is cleaved off and the GPI-modified mannoprotein is covalently attached via its lipidless GPI glycan remnant to the 1,6-beta-glucan of the outer cell wall layer. N-glycosylated.

Its subcellular location is the spore wall. It localises to the secreted. It is found in the cell wall. The protein localises to the membrane. The polypeptide is Sorulation-regulated protein 2 (Saccharomyces cerevisiae (strain ATCC 204508 / S288c) (Baker's yeast)).